The primary structure comprises 135 residues: DNA-binding protein inhibitor ID-2-B (135 aa).

The bHLH domain occupies 23-75 (ARSKAPVDEPMSLLYNMNDCYSKLKELVPSIPPNKKVSKMEILQHVIDYILDL). The Nuclear export signal motif lies at 108–117 (LNTDISILSL).

As to quaternary structure, heterodimer with other HLH proteins.

The protein localises to the cytoplasm. Its subcellular location is the nucleus. Functionally, transcriptional regulator (lacking a basic DNA binding domain) which negatively regulates the basic helix-loop-helix (bHLH) transcription factors by forming heterodimers and inhibiting their DNA binding and transcriptional activity. Inhibits the activity of both neurogenic (neurod1/neuroD) and myogenic (myod1/myoD) bHLH factors. May play a role in the regulation of the circadian clock. This chain is DNA-binding protein inhibitor ID-2-B (id2-b), found in Xenopus laevis (African clawed frog).